The following is a 208-amino-acid chain: Regulator of Ty1 transposition protein 105 (208 aa).

A disordered region spans residues 28–105 (GVSFDRSLTP…QRADQRSRLE (78 aa)). The span at 33-42 (RSLTPQSLRT) shows a compositional bias: polar residues. Residues 60-71 (IDTSPSVVSDII) show a composition bias toward low complexity. A compositionally biased stretch (basic and acidic residues) spans 94–105 (ERQRADQRSRLE).

It is found in the cytoplasm. It localises to the nucleus. Its function is as follows. Involved in regulation of Ty1 transposition. Inhibits Ty1 transposition at a post-transcriptional and pre-integrational stage of the Ty1 retrotransposition cycle. The polypeptide is Regulator of Ty1 transposition protein 105 (RTT105) (Saccharomyces cerevisiae (strain YJM789) (Baker's yeast)).